The following is a 473-amino-acid chain: 6-phosphogluconate dehydrogenase, decarboxylating (473 aa).

NADP(+)-binding positions include 10 to 15 (GMAVMG), 33 to 35 (NRT), 74 to 76 (VKS), and asparagine 102. Substrate-binding positions include asparagine 102 and 128 to 130 (SGG). The Proton acceptor role is filled by lysine 182. 185–186 (HN) is a binding site for substrate. The active-site Proton donor is the glutamate 189. Positions 190, 260, 287, 446, and 452 each coordinate substrate.

It belongs to the 6-phosphogluconate dehydrogenase family. Homodimer.

The enzyme catalyses 6-phospho-D-gluconate + NADP(+) = D-ribulose 5-phosphate + CO2 + NADPH. It participates in carbohydrate degradation; pentose phosphate pathway; D-ribulose 5-phosphate from D-glucose 6-phosphate (oxidative stage): step 3/3. Functionally, catalyzes the oxidative decarboxylation of 6-phosphogluconate to ribulose 5-phosphate and CO(2), with concomitant reduction of NADP to NADPH. The polypeptide is 6-phosphogluconate dehydrogenase, decarboxylating (gnd) (Buchnera aphidicola subsp. Schizaphis graminum (strain Sg)).